Reading from the N-terminus, the 370-residue chain is MPQEEKTLRMDTPPPDEILGKQNENLQNQDEELGFKEMDGLREALANLRGLSEEEKGEKAMLRSRIQEQSQLICILKRRSDEALERCQILELLNSELEEKRLQEMEKLKAQSEHIQKLENHFMILASNHEQMIRFKDAHKSENVKLKEENARLRQENNSLFSQALKDQEAKVLELTTLNKALVEELEVLKQRCAHEASQAQAREEELLGLQNQQACDHAKETEELRSQLQSIKQQHQQATEQMGKEQEANLNLNQELQARLQTVLREKEELLQLSMERGKVLQNKQAEIRQLEEKLETAAMAKKHALERFEQEAVAVDSNLRVRELQRRVDGIQKAYDELRLQSEAFKKHSLDLLSKERELNAKLRHLFP.

The tract at residues 1–21 (MPQEEKTLRMDTPPPDEILGK) is disordered. Phosphothreonine is present on threonine 12. Residues 36–346 (KEMDGLREAL…YDELRLQSEA (311 aa)) adopt a coiled-coil conformation.

The protein belongs to the CCDC89 family. Interacts with HEY1. As to expression, expression is restricted to the adult testis, where localization is almost exclusive to round spermatids.

The protein resides in the cytoplasm. Its subcellular location is the nucleus. This Mus musculus (Mouse) protein is Coiled-coil domain-containing protein 89.